We begin with the raw amino-acid sequence, 63 residues long: Large ribosomal subunit protein bL35 (63 aa).

Belongs to the bacterial ribosomal protein bL35 family.

The chain is Large ribosomal subunit protein bL35 from Finegoldia magna (strain ATCC 29328 / DSM 20472 / WAL 2508) (Peptostreptococcus magnus).